Reading from the N-terminus, the 79-residue chain is Small ribosomal subunit protein bS18 (79 aa).

This sequence belongs to the bacterial ribosomal protein bS18 family. In terms of assembly, part of the 30S ribosomal subunit. Forms a tight heterodimer with protein bS6.

Binds as a heterodimer with protein bS6 to the central domain of the 16S rRNA, where it helps stabilize the platform of the 30S subunit. The protein is Small ribosomal subunit protein bS18 of Streptococcus thermophilus (strain CNRZ 1066).